Consider the following 330-residue polypeptide: DNA-directed RNA polymerase subunit alpha (330 aa).

The alpha N-terminal domain (alpha-NTD) stretch occupies residues 1-235 (MQGSVTEFLK…EQLEAFVDLR (235 aa)). The segment at 249 to 330 (FDPILLRPVD…WPPASIADNE (82 aa)) is alpha C-terminal domain (alpha-CTD).

The protein belongs to the RNA polymerase alpha chain family. Homodimer. The RNAP catalytic core consists of 2 alpha, 1 beta, 1 beta' and 1 omega subunit. When a sigma factor is associated with the core the holoenzyme is formed, which can initiate transcription.

The catalysed reaction is RNA(n) + a ribonucleoside 5'-triphosphate = RNA(n+1) + diphosphate. DNA-dependent RNA polymerase catalyzes the transcription of DNA into RNA using the four ribonucleoside triphosphates as substrates. This is DNA-directed RNA polymerase subunit alpha from Yersinia enterocolitica serotype O:8 / biotype 1B (strain NCTC 13174 / 8081).